The following is a 372-amino-acid chain: 3-isopropylmalate dehydrogenase (372 aa).

79–90 is a binding site for NAD(+); sequence GPKWQGGAVRPE. 4 residues coordinate substrate: R97, R107, R136, and D225. Mg(2+) contacts are provided by D225, D250, and D254. 289–300 provides a ligand contact to NAD(+); that stretch reads GSAPDLPAGKAN.

The protein belongs to the isocitrate and isopropylmalate dehydrogenases family. Homodimer. The cofactor is Mg(2+). Requires Mn(2+) as cofactor.

It is found in the cytoplasm. It carries out the reaction (2R,3S)-3-isopropylmalate + NAD(+) = 4-methyl-2-oxopentanoate + CO2 + NADH. It participates in amino-acid biosynthesis; L-leucine biosynthesis; L-leucine from 3-methyl-2-oxobutanoate: step 3/4. In terms of biological role, catalyzes the oxidation of 3-carboxy-2-hydroxy-4-methylpentanoate (3-isopropylmalate) to 3-carboxy-4-methyl-2-oxopentanoate. The product decarboxylates to 4-methyl-2 oxopentanoate. This chain is 3-isopropylmalate dehydrogenase (LEU2), found in Eremothecium gossypii (strain ATCC 10895 / CBS 109.51 / FGSC 9923 / NRRL Y-1056) (Yeast).